A 1671-amino-acid polypeptide reads, in one-letter code: DENN domain-containing protein Crag (1671 aa).

The MABP domain maps to 39 to 195 (IEPITDIGVY…DVYLCYKKSM (157 aa)). The region spanning 187–364 (VYLCYKKSMY…DEVPFPAPSI (178 aa)) is the uDENN domain. The 137-residue stretch at 385 to 521 (PLPRSGAGFH…AARLLRQTLT (137 aa)) folds into the cDENN domain. The dDENN domain maps to 523 to 632 (LENAKPISYD…ERSFVSDGDH (110 aa)). Disordered stretches follow at residues 997 to 1160 (QQQQ…PVAS), 1245 to 1311 (ANST…RLSE), and 1415 to 1435 (VEES…ANGN). Acidic residues-rich tracts occupy residues 1011 to 1023 (GDDD…EDEY) and 1050 to 1061 (YEADEEDEDEVD). Residues 1072–1089 (RVQSPTKISPRTPVTQND) are compositionally biased toward polar residues. A compositionally biased stretch (low complexity) spans 1100–1119 (AASATPTQETQQEQQHSQSQ). Polar residues predominate over residues 1136 to 1147 (RSATFDESTQIG). Basic residues predominate over residues 1254–1277 (NGHHPHGLHHGHHHPHHHHHHHSQ). A compositionally biased stretch (basic and acidic residues) spans 1281-1301 (AEQEEHDAAVHEEGKLRRVSS).

As to quaternary structure, interacts with Cam. Interacts with Rab10. Interacts (via the DENN domains) with Rab11. As to expression, expressed in the adult head and body.

It is found in the cytoplasm. The protein localises to the cell cortex. The protein resides in the early endosome. Its subcellular location is the recycling endosome. It localises to the cytoplasmic granule. In terms of biological role, calmodulin-binding protein that acts as a guanine exchange factor for Rab10 and Rab11. Essential for maintenance of adult photoreceptor cells. Upon light stimulation, required for trafficking of newly synthesized ninaE (Rh1) from the trans-Golgi network to rhabdomere membranes via Rab11-dependent vesicular transport. During egg development, essential for establishing and maintaining epithelial cell polarity by regulating the correct polarized deposition of basal membrane (BM) proteins in follicular epithelial (FE) cells. Functions by targeting Rab10 to the basal cytoplasm, where it restricts the secretion of BM proteins such as trol/Pcan and vkg/Coll IV to the basal surface. Appears to be involved in regulating the levels and distribution of the guanine nucleotide exchange factor strat, however the two proteins appear to have independent roles in regulating polarized BM protein secretion in the FE. This is DENN domain-containing protein Crag from Drosophila melanogaster (Fruit fly).